The following is a 587-amino-acid chain: Proteasome-associated ATPase (587 aa).

Residues 1-94 (MAARDDAEAR…KEEVDRLAQP (94 aa)) are a coiled coil. 276–281 (GCGKTL) is an ATP binding site. Residues 586–587 (YL) form a docks into pockets in the proteasome alpha-ring region.

Belongs to the AAA ATPase family. In terms of assembly, homohexamer. Assembles into a hexameric ring structure that caps the 20S proteasome core. Strongly interacts with the prokaryotic ubiquitin-like protein Pup through a hydrophobic interface; the interacting region of ARC lies in its N-terminal coiled-coil domain. There is one Pup binding site per ARC hexamer ring. Upon ATP-binding, the C-terminus of ARC interacts with the alpha-rings of the proteasome core, possibly by binding to the intersubunit pockets.

Its pathway is protein degradation; proteasomal Pup-dependent pathway. ATPase which is responsible for recognizing, binding, unfolding and translocation of pupylated proteins into the bacterial 20S proteasome core particle. May be essential for opening the gate of the 20S proteasome via an interaction with its C-terminus, thereby allowing substrate entry and access to the site of proteolysis. Thus, the C-termini of the proteasomal ATPase may function like a 'key in a lock' to induce gate opening and therefore regulate proteolysis. This Streptosporangium roseum (strain ATCC 12428 / DSM 43021 / JCM 3005 / KCTC 9067 / NCIMB 10171 / NRRL 2505 / NI 9100) protein is Proteasome-associated ATPase.